The chain runs to 490 residues: Delta(14)-sterol reductase (490 aa).

Helical transmembrane passes span 23–43 (FGGPIGAFGITFGLPILVHVF), 80–100 (VFGLFSWSATLWTLGYYALSL), 136–156 (LAILAAGTIAQGAEFPVWTFI), 160–180 (FAQIISANILFAFALAIFVYV), 230–250 (EFMEMRPGLLGWIILNCAFIA), 255–275 (LYGYVTDSILFITAIQAFYVF), and 324–344 (QLGAFGLIAVGAVLAAGYSIF). Residues lysine 351, arginine 355, isoleucine 378, tryptophan 383, and 390 to 391 (NY) each bind NADP(+). Residues 436 to 456 (ARGWGIVFTYFYILYFAILLI) traverse the membrane as a helical segment. Residues aspartate 462, 466-470 (CSKKY), and tyrosine 477 each bind NADP(+).

This sequence belongs to the ERG4/ERG24 family.

The protein resides in the membrane. It carries out the reaction 4,4-dimethyl-5alpha-cholesta-8,24-dien-3beta-ol + NADP(+) = 4,4-dimethyl-5alpha-cholesta-8,14,24-trien-3beta-ol + NADPH + H(+). It functions in the pathway steroid biosynthesis; zymosterol biosynthesis; zymosterol from lanosterol: step 2/6. Reduces the C14=C15 double bond of 4,4-dimethyl-cholesta-8,14,24-trienol to produce 4,4-dimethyl-cholesta-8,24-dienol. The polypeptide is Delta(14)-sterol reductase (erg-3) (Neurospora crassa (strain ATCC 24698 / 74-OR23-1A / CBS 708.71 / DSM 1257 / FGSC 987)).